Consider the following 504-residue polypeptide: MYIMSKKCYDTSEKIDREQECVEVNYQHRNFESILEIFSVLFIPFLCNSGKKFLQISNASFFLPACFYLLGSSSIIQLYEPLLWLSSFPFCILYVGFGENSVLYHEMYTVCLYNALLSLTQRWKWLSIVLDGLGNSSVNLKLHETVILAFLEITQNSFTFIEGILICTGLTGLCFATFSYEVSPVVSVLSGVLLISLPTLILLNLCILKLAAKLHLSALFTTCLIYFFSALLVFLVSRSWVAGQLGQAPEVWLFNQIFSHRNSLTRIKIIIWWIICLGCFIFILLRSNRNNPLGKYFTTEDEVLNFRRKTYHALVVFLFLPVCCLDPHFLHLSFSGVLFIFLFVEGIRILRLKPFGKMIHEFLWEYTDNRDHKGPLIISHIYLLIGCAIPIWLSNALKGPVASVELLVGVLCLGCGDSMASIIGKRFGKHRISKTNKSIEGVFAFSISVFLVLHLTQAFHVCPSVTFWKTLFMSLCTAILEGVSTENDNLILPMYMWVLYQALD.

The Cytoplasmic segment spans residues 1–55 (MYIMSKKCYDTSEKIDREQECVEVNYQHRNFESILEIFSVLFIPFLCNSGKKFLQ). The helical transmembrane segment at 56–76 (ISNASFFLPACFYLLGSSSII) threads the bilayer. Position 77 (Q77) is a topological domain, lumenal. Residues 78-98 (LYEPLLWLSSFPFCILYVGFG) form a helical membrane-spanning segment. The Cytoplasmic segment spans residues 99-157 (ENSVLYHEMYTVCLYNALLSLTQRWKWLSIVLDGLGNSSVNLKLHETVILAFLEITQNS). Residues 158–178 (FTFIEGILICTGLTGLCFATF) traverse the membrane as a helical segment. Over 179 to 187 (SYEVSPVVS) the chain is Lumenal. Residues 188–208 (VLSGVLLISLPTLILLNLCIL) form a helical membrane-spanning segment. Residues 209-215 (KLAAKLH) are Cytoplasmic-facing. Residues 216 to 236 (LSALFTTCLIYFFSALLVFLV) form a helical membrane-spanning segment. The Lumenal segment spans residues 237–263 (SRSWVAGQLGQAPEVWLFNQIFSHRNS). The helical transmembrane segment at 264-284 (LTRIKIIIWWIICLGCFIFIL) threads the bilayer. Residues 285-325 (LRSNRNNPLGKYFTTEDEVLNFRRKTYHALVVFLFLPVCCL) lie on the Cytoplasmic side of the membrane. The helical transmembrane segment at 326–347 (DPHFLHLSFSGVLFIFLFVEGI) threads the bilayer. At 348-373 (RILRLKPFGKMIHEFLWEYTDNRDHK) the chain is on the lumenal side. A helical transmembrane segment spans residues 374 to 394 (GPLIISHIYLLIGCAIPIWLS). The Cytoplasmic segment spans residues 395–403 (NALKGPVAS). A helical transmembrane segment spans residues 404–424 (VELLVGVLCLGCGDSMASIIG). Residues 425–440 (KRFGKHRISKTNKSIE) are Lumenal-facing. Residues 441–461 (GVFAFSISVFLVLHLTQAFHV) traverse the membrane as a helical segment. A topological domain (cytoplasmic) is located at residue C462. A helical transmembrane segment spans residues 463 to 483 (PSVTFWKTLFMSLCTAILEGV). The Lumenal segment spans residues 484-504 (STENDNLILPMYMWVLYQALD).

It belongs to the polyprenol kinase family.

The protein localises to the endoplasmic reticulum membrane. The catalysed reaction is a di-trans,poly-cis-dolichol + CTP = a di-trans,poly-cis-dolichyl phosphate + CDP + H(+). The protein operates within protein modification; protein glycosylation. Catalyzes CTP-mediated phosphorylation of dolichol, the terminal step in de novo dolichyl monophosphate (Dol-P) biosynthesis. Dol-P is a lipid carrier essential for the synthesis of N-linked and O-linked oligosaccharides and for GPI anchors. In Schizosaccharomyces pombe (strain 972 / ATCC 24843) (Fission yeast), this protein is Dolichol kinase sec59.